Reading from the N-terminus, the 420-residue chain is Carbohydrate sulfotransferase 1 (420 aa).

Residue Met1 is a topological domain, cytoplasmic. Residues 2–23 (QCSWKAVILLALVSIAIQYTAI) traverse the membrane as a helical; Signal-anchor for type II membrane protein segment. Over 24 to 420 (RTFTAKPFHI…IEDKTFIPFL (397 aa)) the chain is Lumenal. Asn64 carries N-linked (GlcNAc...) asparagine glycosylation. Position 77–83 (77–83 (TRSGSSF)) interacts with 3'-phosphoadenylyl sulfate. Residues Asn153 and Asn197 are each glycosylated (N-linked (GlcNAc...) asparagine). 242–250 (RDPRGILSS) contacts 3'-phosphoadenylyl sulfate. 2 N-linked (GlcNAc...) asparagine glycosylation sites follow: Asn342 and Asn405.

It belongs to the sulfotransferase 1 family. Gal/GlcNAc/GalNAc subfamily.

It localises to the golgi apparatus membrane. The enzyme catalyses 3'-phosphoadenylyl sulfate + keratan = adenosine 3',5'-bisphosphate + keratan 6'-sulfate.. In terms of biological role, sulfotransferase that utilizes 3'-phospho-5'-adenylyl sulfate (PAPS) as sulfonate donor to catalyze the transfer of sulfate to position 6 of galactose (Gal) residues of keratan. The sequence is that of Carbohydrate sulfotransferase 1 (chst1) from Danio rerio (Zebrafish).